Here is a 169-residue protein sequence, read N- to C-terminus: Orotate phosphoribosyltransferase (169 aa).

5-phospho-alpha-D-ribose 1-diphosphate is bound by residues Arg86, Lys90, His92, and Glu111–Ser119. Orotate is bound by residues Thr115 and Arg143.

It belongs to the purine/pyrimidine phosphoribosyltransferase family. PyrE subfamily. In terms of assembly, homodimer. Mg(2+) is required as a cofactor.

The enzyme catalyses orotidine 5'-phosphate + diphosphate = orotate + 5-phospho-alpha-D-ribose 1-diphosphate. It functions in the pathway pyrimidine metabolism; UMP biosynthesis via de novo pathway; UMP from orotate: step 1/2. Its function is as follows. Catalyzes the transfer of a ribosyl phosphate group from 5-phosphoribose 1-diphosphate to orotate, leading to the formation of orotidine monophosphate (OMP). The chain is Orotate phosphoribosyltransferase from Methanocorpusculum labreanum (strain ATCC 43576 / DSM 4855 / Z).